Reading from the N-terminus, the 536-residue chain is Zinc finger protein 623 (536 aa).

A disordered region spans residues 57 to 77; it reads GELLGNPEGQSLGSSPSQDRG. Polar residues predominate over residues 64 to 74; that stretch reads EGQSLGSSPSQ. 13 consecutive C2H2-type zinc fingers follow at residues 123-145, 151-173, 179-201, 207-229, 235-257, 263-285, 291-313, 319-341, 347-369, 375-397, 403-425, 431-453, and 459-481; these read NPCD…RISH, YTCD…QRIH, YVCN…QRVH, FKCA…QRVH, FECK…QRIH, YECN…YQIH, YECK…QRIH, FECN…QRIH, YVCN…QRIH, YECN…QKIH, YECK…QKIH, FECK…QIIH, and YVCS…QKIH. Lys-445 is covalently cross-linked (Glycyl lysine isopeptide (Lys-Gly) (interchain with G-Cter in SUMO2)). A disordered region spans residues 513-536; that stretch reads LSLSKAPIHLGERSVDKGEHTGNL. A compositionally biased stretch (basic and acidic residues) spans 522–536; the sequence is LGERSVDKGEHTGNL.

The protein belongs to the krueppel C2H2-type zinc-finger protein family.

It is found in the nucleus. Its function is as follows. May be involved in transcriptional regulation. In Homo sapiens (Human), this protein is Zinc finger protein 623 (ZNF623).